A 204-amino-acid chain; its full sequence is Probable UbiX-like flavin prenyltransferase (204 aa).

Residues 21 to 23, serine 47, 98 to 101, and arginine 133 contribute to the FMN site; these read GAT and SMKS.

The protein belongs to the UbiX/PAD1 family. YclB subfamily. As to quaternary structure, homododecamer.

The enzyme catalyses dimethylallyl phosphate + FMNH2 = prenylated FMNH2 + phosphate. Its function is as follows. Involved in the non-oxidative decarboxylation and detoxification of phenolic derivatives under both aerobic and anaerobic conditions. Flavin prenyltransferase that catalyzes the synthesis of the prenylated FMN cofactor (prenyl-FMN) for phenolic acid decarboxylase. This is Probable UbiX-like flavin prenyltransferase from Bacillus subtilis (strain 168).